A 149-amino-acid chain; its full sequence is Proline-rich acidic protein 1 (149 aa).

Positions 1-20 (MKRFLLATCLVAALLWEAGA) are cleaved as a signal peptide. Disordered stretches follow at residues 51 to 79 (EPLE…KRPD) and 97 to 122 (LQGP…EVPQ). Over residues 66 to 79 (PKQKPAAAEEKRPD) the composition is skewed to basic and acidic residues.

In terms of assembly, interacts with MTTP. Interacts with MAD1L1. As to expression, predominantly expressed in the intestinal epithelial cells than in the liver (at protein level). Abundantly expressed in the uterus during late pregnancy by uterus epithelial cells. After birth expression rapidly decreases and is no longer found in the uterus by the third day. Also highly expressed in the small intestine where it shows a proximal-distal graded expression.

Its subcellular location is the secreted. It localises to the endoplasmic reticulum. Functionally, lipid-binding protein which promotes lipid absorption by facilitating MTTP-mediated lipid transfer (mainly triglycerides and phospholipids) and MTTP-mediated apoB lipoprotein assembly and secretion. Protects the gastrointestinal epithelium from irradiation-induced apoptosis. May play an important role in maintaining normal growth homeostasis in epithelial cells. Involved in p53/TP53-dependent cell survival after DNA damage. This chain is Proline-rich acidic protein 1 (Prap1), found in Mus musculus (Mouse).